The sequence spans 106 residues: UPF0145 protein CPE0882 (106 aa).

Belongs to the UPF0145 family.

This Clostridium perfringens (strain 13 / Type A) protein is UPF0145 protein CPE0882.